The primary structure comprises 423 residues: Protein CLP1 homolog (423 aa).

Residues E19, K60, and 122–127 each bind ATP; that span reads DVGKTT.

The protein belongs to the Clp1 family. Clp1 subfamily.

The protein localises to the nucleus. In terms of biological role, required for endonucleolytic cleavage during polyadenylation-dependent pre-mRNA 3'-end formation. The polypeptide is Protein CLP1 homolog (cbc) (Culex quinquefasciatus (Southern house mosquito)).